Here is a 240-residue protein sequence, read N- to C-terminus: uncharacterized protein (240 aa).

The signal sequence occupies residues 1–30; the sequence is MNKSGMSLIITMLLLIGTAIVIGAAYYAWS.

This is an uncharacterized protein from Methanocaldococcus jannaschii (strain ATCC 43067 / DSM 2661 / JAL-1 / JCM 10045 / NBRC 100440) (Methanococcus jannaschii).